A 795-amino-acid chain; its full sequence is Lon protease 1 (795 aa).

Residues 9-204 (LPVLPLRNTV…RVLALLLRDL (196 aa)) enclose the Lon N-terminal domain. 360 to 367 (GPPGVGKT) is an ATP binding site. Positions 596–777 (EPQVGAAQGL…GEVLKLLLLP (182 aa)) constitute a Lon proteolytic domain. Catalysis depends on residues S683 and K726.

Belongs to the peptidase S16 family. In terms of assembly, homohexamer. Organized in a ring with a central cavity.

The protein localises to the cytoplasm. It catalyses the reaction Hydrolysis of proteins in presence of ATP.. ATP-dependent serine protease that mediates the selective degradation of mutant and abnormal proteins as well as certain short-lived regulatory proteins. Required for cellular homeostasis and for survival from DNA damage and developmental changes induced by stress. Degrades polypeptides processively to yield small peptide fragments that are 5 to 10 amino acids long. Binds to DNA in a double-stranded, site-specific manner. This chain is Lon protease 1, found in Thermus thermophilus (strain ATCC BAA-163 / DSM 7039 / HB27).